Here is a 1134-residue protein sequence, read N- to C-terminus: Tetrathionate reductase subunit A (1134 aa).

The segment at residues 1–31 is a signal peptide (tat-type signal); the sequence is MQLSRRDFIKGLVAVGSASVFLAGYSETVDR. The 4Fe-4S Mo/W bis-MGD-type domain maps to 46-133; sequence GRIVHSACLG…DGIHYLYDPY (88 aa). [4Fe-4S] cluster is bound by residues C53, C56, C60, and C119.

This sequence belongs to the prokaryotic molybdopterin-containing oxidoreductase family. In terms of assembly, probably composed of three subunits: TtrA, TtrB and TtrC. Precursor interacts with TtrD. [4Fe-4S] cluster is required as a cofactor. Mo-bis(molybdopterin guanine dinucleotide) serves as cofactor. Post-translationally, exported by the Tat system. The position of the signal peptide cleavage has not been experimentally proven.

The protein localises to the cell membrane. Its function is as follows. Part of a membrane-bound tetrathionate reductase that catalyzes the reduction of tetrathionate to thiosulfate. TtrA is the catalytic subunit. The polypeptide is Tetrathionate reductase subunit A (ttrA) (Archaeoglobus fulgidus (strain ATCC 49558 / DSM 4304 / JCM 9628 / NBRC 100126 / VC-16)).